The chain runs to 201 residues: Small ribosomal subunit protein uS4 (201 aa).

An S4 RNA-binding domain is found at 91-151; sequence SRLDNVVYRA…EKSRKMVWFD (61 aa).

It belongs to the universal ribosomal protein uS4 family. Part of the 30S ribosomal subunit. Contacts protein S5. The interaction surface between S4 and S5 is involved in control of translational fidelity.

Functionally, one of the primary rRNA binding proteins, it binds directly to 16S rRNA where it nucleates assembly of the body of the 30S subunit. Its function is as follows. With S5 and S12 plays an important role in translational accuracy. This chain is Small ribosomal subunit protein uS4, found in Corynebacterium kroppenstedtii (strain DSM 44385 / JCM 11950 / CIP 105744 / CCUG 35717).